We begin with the raw amino-acid sequence, 324 residues long: tRNA dimethylallyltransferase (324 aa).

Glycine 17–threonine 24 contributes to the ATP binding site. Threonine 19 to threonine 24 is a substrate binding site. Interaction with substrate tRNA stretches follow at residues aspartate 42 to leucine 45, glutamine 166 to arginine 170, and arginine 251 to arginine 256.

It belongs to the IPP transferase family. In terms of assembly, monomer. Mg(2+) serves as cofactor.

The enzyme catalyses adenosine(37) in tRNA + dimethylallyl diphosphate = N(6)-dimethylallyladenosine(37) in tRNA + diphosphate. In terms of biological role, catalyzes the transfer of a dimethylallyl group onto the adenine at position 37 in tRNAs that read codons beginning with uridine, leading to the formation of N6-(dimethylallyl)adenosine (i(6)A). The protein is tRNA dimethylallyltransferase of Burkholderia thailandensis (strain ATCC 700388 / DSM 13276 / CCUG 48851 / CIP 106301 / E264).